A 266-amino-acid chain; its full sequence is HLA class II histocompatibility antigen, DR beta 3 chain (266 aa).

The signal sequence occupies residues 1 to 29; it reads MVCLKLPGGSSLAALTVTLMVLSSRLAFA. The segment at 30–124 is beta-1; that stretch reads GDTRPRFLEL…GESFTVQRRV (95 aa). The Extracellular portion of the chain corresponds to 30-227; sequence GDTRPRFLEL…RARSESAQSK (198 aa). Cystine bridges form between Cys-44/Cys-108 and Cys-146/Cys-202. N-linked (GlcNAc...) asparagine glycosylation occurs at Asn-48. The segment at 125-227 is beta-2; the sequence is HPQVTVYPAK…RARSESAQSK (103 aa). The 89-residue stretch at 126-214 folds into the Ig-like C1-type domain; that stretch reads PQVTVYPAKT…EHPSVTSALT (89 aa). A helical transmembrane segment spans residues 228 to 248; the sequence is MLSGVGGFVLGLLFLGAGLFI. At 249–266 the chain is on the cytoplasmic side; sequence YFRNQKGHSGLQPTGFLS.

The protein belongs to the MHC class II family. As to quaternary structure, heterotrimer that consists of an alpha chain HLA-DRA, a beta chain HLA-DRB1 and a peptide (peptide-MHCII). Newly synthesized alpha and beta chains forms a heterodimer (MHCII) that associates with the CD74/invariant chain (Ii) in the endoplasmic reticulum (ER). Ii is a trimer composed of three subunits and each subunit interacts with one MHCII dimer, blocking the peptide-binding cleft. As a result, MHCII molecules cannot bind peptides present in the ER. The complex of MHCII and CD74/Ii is transported in vesicles from ER to Golgi to lysosomes, where it encounters antigenic peptides generated via proteolysis of endocytosed antigens. MHCII dimers are dissociated from CD74/Ii by the combined action of proteolysis and HLA-DM. Lysosomal enzymes such as cathepsin, degrade CD74/Ii leaving a 24 amino acid remnant called class II-associated Ii or CLIP. Interacts (via the peptide binding cleft) with CLIP; this interaction inhibits antigen peptide binding before entry in the endosomal compartment. The displacement of CLIP and replacement by a high affinity peptide in lysosomes is performed by HLA-DM heterodimer. HLA-DM catalyzes CLIP dissociation from MHCII, stabilizes empty MHCII and mediates the selection of high affinity peptides. Interacts with HLA-DM heterodimer; this interaction is direct. Interacts with TCR (via CDR3). Interacts (via beta-2 domain) with CD4 coreceptor (via Ig-like V-type domain); this interaction is of exceptionally low affinity yet necessary for optimal recognition of antigenic peptides. Post-translationally, ubiquitinated by MARCHF1 and MARCHF8 at Lys-254 leading to sorting into the endosome system and down-regulation of MHC class II. In terms of tissue distribution, expressed in professional APCs: monocyte/macrophages, dendritic cells and B cells (at protein level).

The protein resides in the cell membrane. The protein localises to the endoplasmic reticulum membrane. Its subcellular location is the lysosome membrane. It is found in the late endosome membrane. It localises to the autolysosome membrane. In terms of biological role, a beta chain of antigen-presenting major histocompatibility complex class II (MHCII) molecule. In complex with the alpha chain HLA-DRA, displays antigenic peptides on professional antigen presenting cells (APCs) for recognition by alpha-beta T cell receptor (TCR) on HLA-DRB3-restricted CD4-positive T cells. This guides antigen-specific T-helper effector functions, both antibody-mediated immune response and macrophage activation, to ultimately eliminate the infectious agents and transformed cells. Typically presents extracellular peptide antigens of 10 to 30 amino acids that arise from proteolysis of endocytosed antigens in lysosomes. In the tumor microenvironment, presents antigenic peptides that are primarily generated in tumor-resident APCs likely via phagocytosis of apoptotic tumor cells or macropinocytosis of secreted tumor proteins. Presents peptides derived from intracellular proteins that are trapped in autolysosomes after macroautophagy, a mechanism especially relevant for T cell selection in the thymus and central immune tolerance. The selection of the immunodominant epitopes follows two processing modes: 'bind first, cut/trim later' for pathogen-derived antigenic peptides and 'cut first, bind later' for autoantigens/self-peptides. The anchor residue at position 1 of the peptide N-terminus, usually a large hydrophobic residue, is essential for high affinity interaction with MHCII molecules. Its function is as follows. ALLELE DRB3*01:01: Exclusively presents several immunogenic epitopes derived from C.tetani neurotoxin tetX, playing a significant role in immune recognition and long-term protection. Presents viral epitopes derived from HHV-6B U11, TRX2/U56 and U85 antigens to polyfunctional CD4-positive T cells with cytotoxic activity implicated in control of HHV-6B infection. Functionally, ALLELE DRB3*02:02 Exclusively presents several immunogenic epitopes derived from C.tetani neurotoxin tetX, playing a significant role in immune recognition and long-term protection. Upon EBV infection, presents to CD4-positive T cells latent antigen EBNA2 (PRSPTVFYNIPPMPLPPSQL) and lytic antigen BZLF1 (LTAYHVSTAPTGSWF) peptides, driving oligoclonal expansion and selection of virus-specific memory T cell subsets with cytotoxic potential to directly eliminate virus-infected B cells. Presents viral epitopes derived from HHV-6B U11, gB/U39 and gH/U48 antigens to polyfunctional CD4-positive T cells with cytotoxic activity implicated in control of HHV-6B infection. Plays a minor role in CD4-positive T cell immune response against Dengue virus by presenting conserved peptides from capsid and non-structural NS3 proteins. Displays peptides derived from IAV matrix protein M, implying a role in protection against IAV infection. In the context of tumor immunesurveillance, may present to T-helper 1 cells an immunogenic epitope derived from tumor-associated antigen WT1 (KRYFKLSHLQMHSRKH), likely providing for effective antitumor immunity in a wide range of solid and hematological malignancies. Presents to Vbeta2-positive T-helper 1 cells specifically an immunodominant peptide derived from tumor antigen CTAG1A/NY-ESO-1(PGVLLKEFTVSGNILTIRLTAADHR) and confers protective memory response. In metastatic epithelial tumors, presents to intratumoral CD4-positive T cells a TP53 neoantigen (HYNYMCNSSCMGSMNRRPILTIITL) carrying G245S hotspot driver mutation and may mediate tumor regression. ALLELE DRB3*03:01: Presents a series of conserved peptides derived from the M.tuberculosis PPE family of proteins, in particular PPE29 and PPE33, known to be highly immunogenic. Presents immunogenic epitopes derived from C.tetani neurotoxin tetX, playing a role in immune recognition and long-term protection. Displays immunodominant viral peptides from HCV non-structural protein NS2, as part of a broad range T-helper response to resolve infection. The chain is HLA class II histocompatibility antigen, DR beta 3 chain (HLA-DRB3) from Homo sapiens (Human).